Here is a 160-residue protein sequence, read N- to C-terminus: D-aminoacyl-tRNA deacylase 2 (160 aa).

A Gly-transPro motif, allows the protein to recognize chirality of D-amino acids motif is present at residues 152 to 153 (GP).

This sequence belongs to the DTD family. Homodimer.

The protein localises to the cytoplasm. The enzyme catalyses a D-aminoacyl-tRNA + H2O = a tRNA + a D-alpha-amino acid + H(+). It carries out the reaction glycyl-tRNA(Ala) + H2O = tRNA(Ala) + glycine + H(+). It catalyses the reaction D-tyrosyl-tRNA(Tyr) + H2O = D-tyrosine + tRNA(Tyr). The catalysed reaction is L-alanyl-tRNA(Thr) + H2O = tRNA(Thr) + L-alanine + H(+). Its function is as follows. Deacylates mischarged D-aminoacyl-tRNAs. Also deacylates mischarged glycyl-tRNA(Ala), protecting cells against glycine mischarging by AlaRS. Probably acts by rejecting L-amino acids from its binding site rather than specific recognition of D-amino acids. Catalyzes the hydrolysis of D-tyrosyl-tRNA(Tyr), has no activity on correctly charged L-tyrosyl-tRNA(Tyr). By recycling D-aminoacyl-tRNA to D-amino acids and free tRNA molecules, this enzyme counteracts the toxicity associated with the formation of D-aminoacyl-tRNA entities in vivo and helps enforce protein L-homochirality. In contrast to DTD1, deacylates L-Ala mischarged on tRNA(Thr)(G4.U69) by alanine-tRNA ligase AARS. Can deacylate L-Ala due to a relaxed specificity for substrate chirality caused by the trans conformation of the Gly-Pro motif in the active site. Also hydrolyzes correctly charged, achiral, glycyl-tRNA(Gly) in vitro, although in vivo eef1a1a/EF-Tu may protect cognate achiral glycyl-tRNA(Gly) from DTD2-mediated deacetylation. The protein is D-aminoacyl-tRNA deacylase 2 (dtd2) of Danio rerio (Zebrafish).